The following is a 601-amino-acid chain: Putative Lon protease homolog (601 aa).

The Lon proteolytic domain maps to 363 to 560 (GEIVGQINGL…YQACELLFGR (198 aa)). Catalysis depends on residues S455 and K498.

It belongs to the peptidase S16 family.

This Haemophilus influenzae (strain ATCC 51907 / DSM 11121 / KW20 / Rd) protein is Putative Lon protease homolog.